The primary structure comprises 105 residues: Small ribosomal subunit protein uS10 (105 aa).

Belongs to the universal ribosomal protein uS10 family. Part of the 30S ribosomal subunit.

Involved in the binding of tRNA to the ribosomes. This Picosynechococcus sp. (strain ATCC 27264 / PCC 7002 / PR-6) (Agmenellum quadruplicatum) protein is Small ribosomal subunit protein uS10.